We begin with the raw amino-acid sequence, 433 residues long: Protein translocase subunit SecY (433 aa).

Helical transmembrane passes span 17–37 (IVFTILILIVCRFGSFIPIPG), 71–91 (IFALAIMPYITASIIIQLMSV), 117–137 (LTVLLASFQAYGVAISLESIV), 141–161 (GPVVILAGFFFRITTVITLVV), 184–204 (LIIFIGIISGVPSAIISMFEL), 212–232 (PLIAIAVCIGVVVLIAIIIFF), 268–288 (GVIPPIFASSILLFPATLANF), 310–330 (YILLYVALIMFFSFFYTAIVF), 366–386 (LTVIGGIYLSVICVIPELLMN), and 388–408 (YVISLSLGGTSFLIVVNVVLD).

Belongs to the SecY/SEC61-alpha family. As to quaternary structure, component of the Sec protein translocase complex. Heterotrimer consisting of SecY, SecE and SecG subunits. The heterotrimers can form oligomers, although 1 heterotrimer is thought to be able to translocate proteins. Interacts with the ribosome. Interacts with SecDF, and other proteins may be involved. Interacts with SecA.

The protein resides in the cell inner membrane. Functionally, the central subunit of the protein translocation channel SecYEG. Consists of two halves formed by TMs 1-5 and 6-10. These two domains form a lateral gate at the front which open onto the bilayer between TMs 2 and 7, and are clamped together by SecE at the back. The channel is closed by both a pore ring composed of hydrophobic SecY resides and a short helix (helix 2A) on the extracellular side of the membrane which forms a plug. The plug probably moves laterally to allow the channel to open. The ring and the pore may move independently. The polypeptide is Protein translocase subunit SecY (Rickettsia conorii (strain ATCC VR-613 / Malish 7)).